The primary structure comprises 549 residues: Probable protein kinase UbiB (549 aa).

A Protein kinase domain is found at Asp-123 to Leu-501. Residues Leu-129–Val-137 and Lys-152 contribute to the ATP site. Catalysis depends on Asp-287, which acts as the Proton acceptor. Helical transmembrane passes span Ser-498 to Gln-518 and Ala-520 to Trp-540.

This sequence belongs to the ABC1 family. UbiB subfamily.

The protein localises to the cell inner membrane. The protein operates within cofactor biosynthesis; ubiquinone biosynthesis [regulation]. In terms of biological role, is probably a protein kinase regulator of UbiI activity which is involved in aerobic coenzyme Q (ubiquinone) biosynthesis. The polypeptide is Probable protein kinase UbiB (Shewanella sp. (strain ANA-3)).